Here is a 203-residue protein sequence, read N- to C-terminus: Outer-membrane lipoprotein carrier protein (203 aa).

Residues 1-21 (MKKMAIACALLSSVVASSVWA) form the signal peptide. Positions 178 to 203 (QQNGAVEPSKFTFTPPQGVTIDDQRK) are disordered.

The protein belongs to the LolA family. As to quaternary structure, monomer.

The protein resides in the periplasm. Functionally, participates in the translocation of lipoproteins from the inner membrane to the outer membrane. Only forms a complex with a lipoprotein if the residue after the N-terminal Cys is not an aspartate (The Asp acts as a targeting signal to indicate that the lipoprotein should stay in the inner membrane). This Salmonella typhi protein is Outer-membrane lipoprotein carrier protein.